The primary structure comprises 300 residues: Vetispiradiene synthase 2 (300 aa).

5 residues coordinate Mg(2+): Asp54, Asp58, Asp197, Thr201, and Glu205. The DDXXD motif signature appears at 54–58 (DDTFD).

This sequence belongs to the terpene synthase family. Tpsa subfamily. The cofactor is Mg(2+).

The protein localises to the cytoplasm. The enzyme catalyses (2E,6E)-farnesyl diphosphate = (-)-vetispiradiene + diphosphate. Its pathway is secondary metabolite biosynthesis; terpenoid biosynthesis. In terms of biological role, sesquiterpene synthase that catalyzes the formation of vetispiradiene from trans,trans-farnesyl diphosphate. The initial internal cyclization produces the monocyclic intermediate germacrene A. In Hyoscyamus muticus (Egyptian henbane), this protein is Vetispiradiene synthase 2.